The sequence spans 793 residues: MSCKVRLMEDGSLDEEPLTLKEIAYQKLCNNLDIISSHRPDGQRGLNPGIVLPNEICDGFLENYQRFNRPLDDSVIRLFEDTHRTSLKIVNLRNSTLSSIGLETLMRHKLFALSLWYCDMISVGSHHLLAHYGDSLRSLELGISSHLLQYAEPNEKEPVDFQLTCPHLRRLVLNGVVMHHRLQFAHLHDLGHLDLTSCVLANFSLEALGSLPNLHTLILFNVWPIANQLHAICCLRRLCTLDISISSSGNGHGTYDLPDQTLEMLMDNLRHLTHLDISGTNLAGNGVATKESTTTSGMQQSPKMEQHFALTDIPGLASRTQRPLQFLGLYHTAHWACKRHDIPALEVAGDANEQQILTAARYYHDRPVLLTRVLNDLYHLFRFENCKDIHTALDVVLSAMDRHLKFKHMQISGSATLFYIVKGRDRSKFGALLRNHIIRTLLNGMEMHITDDTMLRNGYLTLTQFHMPVDVLFEYERLIKILLHGVSKTEQEGFVQRIAIYLLNTLACQVDGRQKLFLGELGVVSTMFTLIKDRLTRSVFDDVMEVAWSTMWNVTDETAINCKRFLDGRGMEYFLKCLHTFPDRDELLRNMMGLLGNVAEVKWLRPKLMTQEFIEVFARLLDSLSDGIEVGGASASVVARVREREMASANHAYLRFQVSYNAAGVLAHIASDGADAWTIKTPSREHVLERMVAAIQRWNIKSERNINYRSFEPILSLVRCYETPQCQHWAVWALANLTQVYPEKYCKLVEQENGIQILNELIEHESPYCEIKRIARLVIEQCDSGSERMVVDG.

LRR repeat units follow at residues 84–108 (RTSL…LMRH), 187–210 (LHDL…ALGS), and 269–294 (LRHL…ESTT).

Belongs to the zyg-11 family.

Serves as substrate adapter subunit in an E3 ubiquitin ligase complex CG12084-cul-2-elongin BC. Targets substrates bearing N-terminal glycine degrons for proteasomal degradation. This Drosophila melanogaster (Fruit fly) protein is Protein zer-1 homolog.